The sequence spans 95 residues: Large ribosomal subunit protein uL23 (95 aa).

This sequence belongs to the universal ribosomal protein uL23 family. Part of the 50S ribosomal subunit. Contacts protein L29 and trigger factor when it is bound to the ribosome.

Its function is as follows. One of the early assembly protein it binds 23S rRNA. One of the proteins that surrounds the polypeptide exit tunnel on the outside of the subunit. Forms the main docking site for trigger factor binding to the ribosome. This chain is Large ribosomal subunit protein uL23, found in Deinococcus radiodurans (strain ATCC 13939 / DSM 20539 / JCM 16871 / CCUG 27074 / LMG 4051 / NBRC 15346 / NCIMB 9279 / VKM B-1422 / R1).